The chain runs to 126 residues: Protein ApaG (126 aa).

One can recognise an ApaG domain in the interval 2–126; it reads SALDNSIRVE…FRLATPGLLH (125 aa).

The chain is Protein ApaG from Shewanella oneidensis (strain ATCC 700550 / JCM 31522 / CIP 106686 / LMG 19005 / NCIMB 14063 / MR-1).